The sequence spans 231 residues: Ribosomal RNA large subunit methyltransferase E (231 aa).

S-adenosyl-L-methionine-binding residues include glycine 76, tryptophan 78, aspartate 99, aspartate 115, and aspartate 139. Lysine 179 functions as the Proton acceptor in the catalytic mechanism.

The protein belongs to the class I-like SAM-binding methyltransferase superfamily. RNA methyltransferase RlmE family.

It localises to the cytoplasm. It carries out the reaction uridine(2552) in 23S rRNA + S-adenosyl-L-methionine = 2'-O-methyluridine(2552) in 23S rRNA + S-adenosyl-L-homocysteine + H(+). Functionally, specifically methylates the uridine in position 2552 of 23S rRNA at the 2'-O position of the ribose in the fully assembled 50S ribosomal subunit. The polypeptide is Ribosomal RNA large subunit methyltransferase E (Bradyrhizobium sp. (strain BTAi1 / ATCC BAA-1182)).